A 102-amino-acid polypeptide reads, in one-letter code: Cytochrome b (102 aa).

The next 3 membrane-spanning stretches (helical) occupy residues 1 to 21 (FGSLLGLCLITQILTGLFLAM), 45 to 66 (WLMRNIHANGASFFFICIFLHI), and 81 to 101 (WNIGVILLFLVMATAFVGYVL). Residues histidine 51 and histidine 65 each contribute to the heme b site.

This sequence belongs to the cytochrome b family. The cytochrome bc1 complex contains 3 respiratory subunits (MT-CYB, CYC1 and UQCRFS1), 2 core proteins (UQCRC1 and UQCRC2) and probably 6 low-molecular weight proteins. Heme b serves as cofactor.

Its subcellular location is the mitochondrion inner membrane. Its function is as follows. Component of the ubiquinol-cytochrome c reductase complex (complex III or cytochrome b-c1 complex) that is part of the mitochondrial respiratory chain. The b-c1 complex mediates electron transfer from ubiquinol to cytochrome c. Contributes to the generation of a proton gradient across the mitochondrial membrane that is then used for ATP synthesis. This is Cytochrome b (mt-cyb) from Ambystoma tigrinum (Eastern tiger salamander).